A 254-amino-acid chain; its full sequence is Protein GltF (254 aa).

An N-terminal signal peptide occupies residues 1-25; that stretch reads MFFKKNLTTAAICAALSVAAFSAMA. Residues 213–229 traverse the membrane as a helical segment; it reads PVAITAVTFPLLIDAAV.

The protein to E.coli YhcF.

It is found in the cell membrane. Its function is as follows. Involved in induction of the so-called NTR enzymes in response to nitrogen deprivation, as well as in glutamate biosynthesis. May mediate the glutamate-dependent repression of the GLT operon. In Escherichia coli (strain K12), this protein is Protein GltF (gltF).